A 765-amino-acid polypeptide reads, in one-letter code: NADPH oxidase 5 (765 aa).

Residues 1-77 are N-terminal lobe of N-terminal regulatory EF domain; sequence MNTSGDPAQT…LFDSDRSGTI (77 aa). Positions 1–161 are N-terminal regulatory EF domain; sequence MNTSGDPAQT…SCLRESAISL (161 aa). The Cytoplasmic segment spans residues 1 to 238; sequence MNTSGDPAQT…RAYWHNHRSQ (238 aa). 2 consecutive EF-hand domains span residues 26-56 and 57-92; these read RWLRWVTQQFKTIAGEDGEISLQEFKAALHV and KESFFAERFFALFDSDRSGTITLQELQEALTLLIHG. Asp42, Glu44, Glu49, Asp70, Asp72, Ser74, Thr76, Glu81, and Asp106 together coordinate Ca(2+). Residues 78–161 form a C-terminal lobe of N-terminal regulatory EF domain region; sequence TLQELQEALT…SCLRESAISL (84 aa). The 64-residue stretch at 93–156 folds into the EF-hand 3; atypical; contains an insert of 28 residues domain; the sequence is SPMDKLKFLF…RTVLQSCLRE (64 aa). An S-nitrosocysteine modification is found at Ile107. Positions 108, 138, 140, 145, 178, 180, 182, and 189 each coordinate Ca(2+). Positions 122–141 are disordered; it reads GAGAGPHWASSPLGTGSGSI. The EF-hand 4 domain occupies 165-200; it reads KLDQLTLALFESADADGNGAITFEELRDELQRFPGV. The helical transmembrane segment at 239–259 threads the bilayer; sequence LFCLATYAGLHVLLFGLAASA. The residue at position 246 (Ala246) is an S-nitrosocysteine. The Extracellular portion of the chain corresponds to 260–266; that stretch reads HRDLGAS. A helical transmembrane segment spans residues 267 to 289; sequence VMVAKGCGQCLNFDCSFIAVLML. The Cytoplasmic portion of the chain corresponds to 290–317; that stretch reads RRCLTWLRATWLAQVLPLDQNIQFHQLM. The Ferric oxidoreductase domain maps to 293-440; the sequence is LTWLRATWLA…FLEKAIGLAV (148 aa). The helical transmembrane segment at 318–338 threads the bilayer; it reads GYVVVGLSLVHTVAHTVNFVL. The Extracellular segment spans residues 339 to 362; that stretch reads QAQAEASPFQFWELLLTTRPGIGW. The helical transmembrane segment at 363-383 threads the bilayer; the sequence is VHGSASPTGVALLLLLLLMFI. Residues 384–394 are Cytoplasmic-facing; it reads CSSSCIRRSGH. Residues 395–417 traverse the membrane as a helical segment; it reads FEVFYWTHLSYLLVWLLLIFHGP. C-terminal catalytic dehydrogenase domain regions lie at residues 398–719 and 416–737; these read FYWT…GRPD and GPNF…KVQV. The Extracellular portion of the chain corresponds to 418–434; that stretch reads NFWKWLLVPGILFFLEK. The chain crosses the membrane as a helical span at residues 435–455; that stretch reads AIGLAVSRMAAVCIMEVNLLP. An FAD-binding FR-type domain is found at 441–577; it reads SRMAAVCIME…DGPYGTPTRR (137 aa). Residues 456-583 lie on the Cytoplasmic side of the membrane; sequence SKVTHLLIKR…PTRRIFASEH (128 aa). Asp475 carries the post-translational modification Phosphoserine; by CaMK2. Position 490 is a phosphothreonine; by PKC/PRKCA (His490). Position 494 is a phosphothreonine; by CaMK2 and PKC/PRKCA (Ile494). Pro498 carries the post-translational modification Phosphoserine; by CaMK2 and PKC/PRKCA. A Phosphoserine; by CaMK2 modification is found at Asp502. Tyr519 bears the S-nitrosocysteine mark. A helical membrane pass occupies residues 584–604; that stretch reads AVLIGAGIGITPFASILQSIM. Residues 605–765 lie on the Extracellular side of the membrane; the sequence is YRHQKRKHTC…FGFRFFQENF (161 aa). Asp659 is modified (phosphoserine; by CaMK2). Leu694 carries the post-translational modification S-nitrosocysteine.

In terms of assembly, homooligomer. The cofactor is FAD. It depends on Mg(2+) as a cofactor. Post-translationally, phosphorylation at Ser-475 by CaMK2 and at Ser-490, Thr-494 and Ser-498 by PKC/PRKCA positively regulates its catalytic activity. S-nitrosylation in response to nitric oxide inhibits its catalytic activity. Mainly expressed in pachytene spermatocytes of testis and in lymphocyte-rich areas of spleen and lymph nodes. Also detected in ovary, placenta, pancreas, cardiac fibroblasts. Expressed in B-cells and prostate malignant cells. As to expression, expressed in spleen. Expressed in endothelial cells, pulmonary artery smooth muscle cells and epithelial colorectal adenocarcinoma cells. In terms of tissue distribution, expressed in microvascular endothelial cells (at protein level). Expressed in testis. Expressed in endothelial cells and pulmonary artery smooth muscle cells. Expressed in pulmonary artery smooth muscle cells and epithelial colorectal adenocarcinoma cells. As to expression, expressed in endothelial cells and pulmonary artery smooth muscle cells. In terms of tissue distribution, expressed in microvascular endothelial cells (at protein level).

It is found in the endoplasmic reticulum. It localises to the cell membrane. The enzyme catalyses NADPH + 2 O2 = 2 superoxide + NADP(+) + H(+). Its activity is regulated as follows. Activated by calcium which induces conformational changes and interaction between the N-terminal regulatory region and the C-terminal catalytic region. Inhibited by diphenylene iodonium. Functionally, calcium-dependent NADPH oxidase that catalyzes the generation of superoxide from molecular oxygen utilizing NADPH as an electron donor. May play a role in cell growth and apoptosis. In terms of biological role, calcium-dependent NADPH oxidase that catalyzes the generation of superoxide from molecular oxygen utilizing NADPH as an electron donor. Involved in endothelial generation of reactive oxygen species (ROS), proliferation and angiogenesis and contributes to endothelial response to thrombin. Regulates redox-dependent processes in lymphocytes and spermatozoa. Calcium-dependent NADPH oxidase that catalyzes the generation of superoxide from molecular oxygen utilizing NADPH as an electron donor. Its function is as follows. This isoform lacks calcium-binding domains and was showed to present a NADPH oxidase activity in a calcium-independent manner. May be involved in endothelial generation of reactive oxygen species (ROS), proliferation and angiogenesis and contribute to endothelial response to thrombin. However another study showed an absence of oxidase activity. Subject to rapid degradation. Functionally, lacks calcium-dependent NADPH oxidase activity. In Homo sapiens (Human), this protein is NADPH oxidase 5.